The chain runs to 439 residues: Xaa-Pro dipeptidase (439 aa).

The Mn(2+) site is built by aspartate 244, aspartate 255, histidine 335, glutamate 380, and glutamate 419.

Belongs to the peptidase M24B family. Bacterial-type prolidase subfamily. The cofactor is Mn(2+).

The catalysed reaction is Xaa-L-Pro dipeptide + H2O = an L-alpha-amino acid + L-proline. Splits dipeptides with a prolyl residue in the C-terminal position. The protein is Xaa-Pro dipeptidase of Shewanella oneidensis (strain ATCC 700550 / JCM 31522 / CIP 106686 / LMG 19005 / NCIMB 14063 / MR-1).